Reading from the N-terminus, the 607-residue chain is MKWVTFISLLLLFSSAYSRGVFRRDTHKSEIAHRFNDLGEENFQGLVLIAFSQYLQQCPFDEHVKLVKELTEFAKTCVADESHAGCDKSLHTLFGDELCKVATLRETYGDMADCCEKQEPERNECFLNHKDDSPDLPKLKPEPDTLCAEFKADEKKFWGKYLYEVARRHPYFYAPELLYYANKYNGVFQECCQAEDKGACLLPKIDAMREKVLASSARQRLRCASIQKFGERALKAWSVARLSQKFPKADFTDVTKIVTDLTKVHKECCHGDLLECADDRADLAKYICDHQDALSSKLKECCDKPVLEKSHCIAEVDKDAVPENLPPLTADFAEDKEVCKNYQEAKDVFLGSFLYEYSRRHPEYAVSVLLRLAKEYEATLEDCCAKEDPHACYATVFDKLKHLVDEPQNLIKKNCELFEKHGEYGFQNALIVRYTRKAPQVSTPTLVEISRSLGKVGTKCCAKPESERMPCTEDYLSLILNRLCVLHEKTPVSEKVTKCCTESLVNRRPCFSDLTLDETYVPKPFDEKFFTFHADICTLPDTEKQIKKQTALVELLKHKPKATDEQLKTVMENFVAFVDKCCAADDKEGCFVLEGPKLVASTQAALA.

An N-terminal signal peptide occupies residues 1-18 (MKWVTFISLLLLFSSAYS). Residues 19–24 (RGVFRR) constitute a propeptide that is removed on maturation. Albumin domains are found at residues 19–209 (RGVF…DAMR), 210–402 (EKVL…KLKH), and 403–600 (LVDE…KLVA). Cu cation is bound at residue H27. S29 carries the post-translational modification Phosphoserine. Ca(2+) is bound by residues E30 and D37. A disulfide bond links C77 and C86. A phosphoserine mark is found at S82 and S89. A Zn(2+)-binding site is contributed by H91. Intrachain disulfides connect C99–C115, C114–C125, C147–C192, C191–C200, C223–C269, and C268–C276. Position 107 is a phosphothreonine (T107). K228 carries the N6-succinyllysine modification. E267 is a Ca(2+) binding site. Zn(2+) is bound by residues H270 and D272. Ca(2+) contacts are provided by D272, E275, D278, and D282. 8 disulfides stabilise this stretch: C288-C302, C301-C312, C339-C384, C383-C392, C415-C461, C460-C471, C484-C500, and C499-C510. At S296 the chain carries Phosphoserine. At S442 the chain carries Phosphoserine. Residues T443 and T445 each carry the phosphothreonine modification. K459 is subject to N6-succinyllysine. Phosphoserine is present on S512. Cystine bridges form between C537–C582 and C581–C590. Residue K557 is modified to N6-methyllysine. Phosphothreonine is present on T569. K587 carries the N6-succinyllysine modification.

The protein belongs to the ALB/AFP/VDB family. As to quaternary structure, interacts with FCGRT; this interaction regulates ALB homeostasis. Interacts with TASOR. In plasma, occurs in a covalently-linked complex with chromophore-bound alpha-1-microglobulin; this interaction does not prevent fatty acid binding to ALB. Post-translationally, phosphorylated by FAM20C in the extracellular medium. Plasma.

The protein localises to the secreted. Functionally, binds water, Ca(2+), Na(+), K(+), fatty acids, hormones, bilirubin and drugs. Its main function is the regulation of the colloidal osmotic pressure of blood. Major zinc transporter in plasma, typically binds about 80% of all plasma zinc. Major calcium and magnesium transporter in plasma, binds approximately 45% of circulating calcium and magnesium in plasma. Potentially has more than two calcium-binding sites and might additionally bind calcium in a non-specific manner. The shared binding site between zinc and calcium at residue Asp-272 suggests a crosstalk between zinc and calcium transport in the blood. The rank order of affinity is zinc &gt; calcium &gt; magnesium. Binds to the bacterial siderophore enterobactin and inhibits enterobactin-mediated iron uptake of E.coli from ferric transferrin, and may thereby limit the utilization of iron and growth of enteric bacteria such as E.coli. Does not prevent iron uptake by the bacterial siderophore aerobactin. The chain is Albumin (ALB) from Ovis aries (Sheep).